The chain runs to 879 residues: Alanine--tRNA ligase (879 aa).

Zn(2+) is bound by residues histidine 566, histidine 570, cysteine 668, and histidine 672.

Belongs to the class-II aminoacyl-tRNA synthetase family. The cofactor is Zn(2+).

It localises to the cytoplasm. The catalysed reaction is tRNA(Ala) + L-alanine + ATP = L-alanyl-tRNA(Ala) + AMP + diphosphate. Catalyzes the attachment of alanine to tRNA(Ala) in a two-step reaction: alanine is first activated by ATP to form Ala-AMP and then transferred to the acceptor end of tRNA(Ala). Also edits incorrectly charged Ser-tRNA(Ala) and Gly-tRNA(Ala) via its editing domain. In Clostridium beijerinckii (strain ATCC 51743 / NCIMB 8052) (Clostridium acetobutylicum), this protein is Alanine--tRNA ligase.